A 380-amino-acid polypeptide reads, in one-letter code: Ubiquitin-like protein 7 (380 aa).

Positions 18 to 98 constitute a Ubiquitin-like domain; that stretch reads APKSILRLPE…VLRKSWPEPD (81 aa). The segment at 201–313 is disordered; it reads PMPGADSSSR…SSSVQSGTPI (113 aa). A Phosphoserine modification is found at serine 230. 2 stretches are compositionally biased toward low complexity: residues 239-255 and 270-312; these read SARSTPSSSTPSSRPAS and SELA…SGTP. Residues 333-377 form the UBA domain; the sequence is SLQSQWQPQLQQLRDMGIQDDELSLRALQATGGDIQAALELIFAG.

As to quaternary structure, binds ubiquitin. Interacts with MAVS; this interaction enhances TRIM21-dependent 'Lys-27'-linked polyubiquitination of MAVS. Deubiquitinated by OTUD4 which stabilizes UBL7 expression.

Functionally, interferon-stimulated protein that positively regulates RNA virus-triggered innate immune signaling. Mechanistically, promotes 'Lys-27'-linked polyubiquitination of MAVS through TRIM21 leading to enhanced the IFN signaling pathway. In Bos taurus (Bovine), this protein is Ubiquitin-like protein 7 (UBL7).